A 512-amino-acid chain; its full sequence is Activin receptor type-2B (512 aa).

The N-terminal stretch at 1-24 is a signal peptide; that stretch reads MSASWLTLAVLCATLGAGPGHGEA. Topologically, residues 25–137 are extracellular; it reads ETRECIYYNA…PPPPTPSLLN (113 aa). Cystine bridges form between cysteine 29–cysteine 59, cysteine 49–cysteine 77, cysteine 84–cysteine 103, cysteine 90–cysteine 102, and cysteine 104–cysteine 109. N-linked (GlcNAc...) asparagine glycosylation is found at asparagine 42 and asparagine 65. The helical transmembrane segment at 138–158 threads the bilayer; sequence ILVYSLLPIAVLSVAILLAFW. At 159–512 the chain is on the cytoplasmic side; it reads MYRHRKPPYG…VDLPPKESSI (354 aa). A Protein kinase domain is found at 190 to 478; that stretch reads LQLLEIKARG…LSAGCVEERI (289 aa). ATP-binding positions include 196 to 204 and lysine 217; that span reads KARGRFGCV. Aspartate 321 functions as the Proton acceptor in the catalytic mechanism.

Belongs to the protein kinase superfamily. TKL Ser/Thr protein kinase family. TGFB receptor subfamily. Mg(2+) serves as cofactor. The cofactor is Mn(2+). In terms of tissue distribution, not expressed in hen anterior pituitary during the ovulatory cycle but expressed in the ovarian follicle.

The protein resides in the membrane. The enzyme catalyses L-threonyl-[receptor-protein] + ATP = O-phospho-L-threonyl-[receptor-protein] + ADP + H(+). It carries out the reaction L-seryl-[receptor-protein] + ATP = O-phospho-L-seryl-[receptor-protein] + ADP + H(+). In terms of biological role, on ligand binding, forms a receptor complex consisting of two type II and two type I transmembrane serine/threonine kinases. Type II receptors phosphorylate and activate type I receptors which autophosphorylate, then bind and activate SMAD transcriptional regulators. Receptor for activin A, activin B and inhibin A. May modulate neuropeptide expression in dorsal root ganglia (DRG) neurons and ovarian follicle development. The sequence is that of Activin receptor type-2B (ACVR2B) from Gallus gallus (Chicken).